The chain runs to 156 residues: Histidine-containing phosphotransfer protein 2 (156 aa).

N-acetylmethionine is present on Met-1. One can recognise an HPt domain in the interval 40 to 147; that stretch reads SPDFVSEVLS…NLEKQIIQAG (108 aa). A Phosphohistidine modification is found at His-82.

As to quaternary structure, interacts with the B-type response regulators ARR1, ARR2 and ARR10. Binds to AHK1, AHK2, AHK3, AHK4, AHK5, ETR1 and CKI1. Post-translationally, two-component system major event consists of a His-to-Asp phosphorelay between a sensor histidine kinase (HK) and a response regulator (RR). In plants, the His-to-Asp phosphorelay involves an additional intermediate named Histidine-containing phosphotransfer protein (HPt). This multistep phosphorelay consists of a His-Asp-His-Asp sequential transfer of a phosphate group between first a His and an Asp of the HK protein, followed by the transfer to a conserved His of the HPt protein and finally the transfer to an Asp in the receiver domain of the RR protein. Strongly expressed in flowers and roots. Detected also in leaves, siliques and stems.

Its subcellular location is the cytoplasm. It is found in the cytosol. The protein localises to the nucleus. Functions as a two-component phosphorelay mediators between cytokinin sensor histidine kinases and response regulator (B-type ARRs). Plays an important role in propagating cytokinin signal transduction through the multistep His-to-Asp phosphorelay. In Arabidopsis thaliana (Mouse-ear cress), this protein is Histidine-containing phosphotransfer protein 2 (AHP2).